We begin with the raw amino-acid sequence, 273 residues long: Nitrogenase iron protein (273 aa).

8-15 (GKGGIGKS) contributes to the ATP binding site. Cys-95 contributes to the [4Fe-4S] cluster binding site. An ADP-ribosylarginine; by dinitrogenase reductase ADP-ribosyltransferase modification is found at Arg-98. Cys-130 serves as a coordination point for [4Fe-4S] cluster.

Belongs to the NifH/BchL/ChlL family. In terms of assembly, homodimer. It depends on [4Fe-4S] cluster as a cofactor. Post-translationally, the reversible ADP-ribosylation of Arg-98 inactivates the nitrogenase reductase and regulates nitrogenase activity.

The catalysed reaction is N2 + 8 reduced [2Fe-2S]-[ferredoxin] + 16 ATP + 16 H2O = H2 + 8 oxidized [2Fe-2S]-[ferredoxin] + 2 NH4(+) + 16 ADP + 16 phosphate + 6 H(+). Functionally, the key enzymatic reactions in nitrogen fixation are catalyzed by the nitrogenase complex, which has 2 components: the iron protein and the molybdenum-iron protein. The polypeptide is Nitrogenase iron protein (Roseiflexus sp. (strain RS-1)).